The following is a 64-amino-acid chain: Prokaryotic ubiquitin-like protein UBact (64 aa).

The disordered stretch occupies residues 1 to 64; that stretch reads MFNGEEVILF…SERYRQRTGE (64 aa). The span at 22–64 shows a compositional bias: basic and acidic residues; that stretch reads REIHKDAPAPKRPETKKTGDRLMDRMKKVDPNQSERYRQRTGE. An Isoglutamyl lysine isopeptide (Glu-Lys) (interchain with K-? in acceptor proteins) cross-link involves residue Glu64.

This sequence belongs to the ubiquitin-like protein UBact family.

In terms of biological role, may function as a protein modifier covalently attached to lysine residues of substrate proteins. This may serve to target the modified proteins for degradation by proteasomes. The chain is Prokaryotic ubiquitin-like protein UBact from Leptospirillum ferriphilum (strain ML-04).